Here is a 274-residue protein sequence, read N- to C-terminus: SIMKMDGSQQEENLDVISTGSLGVDLALGVGGLPRGRVVEIFGPESSGKTTLCLEAIAQCQKNGGICAFIDAEHAFDPIYARKLGVKVEELYLSQPDTGEQALEICDTLVRSGGVDMVVVDSVAALVPKAEIEGEMGDSHVGLQARLMSQALRKLTGHIKRTNTLVVFINQIRMKIGVMFGSPETTTGGNALKFYASVRLDIRRTGQIKKGDDVIGNETKVKVIKNKVAPPFRQAEFDILYGEGVSWEGELIDLGVKYDIVEKSGAWYSYNGAK.

An ATP-binding site is contributed by 43–50; sequence GPESSGKT.

Belongs to the RecA family.

The protein localises to the cytoplasm. Its function is as follows. Can catalyze the hydrolysis of ATP in the presence of single-stranded DNA, the ATP-dependent uptake of single-stranded DNA by duplex DNA, and the ATP-dependent hybridization of homologous single-stranded DNAs. It interacts with LexA causing its activation and leading to its autocatalytic cleavage. In Neisseria mucosa, this protein is Protein RecA.